The primary structure comprises 381 residues: 4-hydroxy-3-methylbut-2-en-1-yl diphosphate synthase (flavodoxin) (381 aa).

Positions 280, 283, 315, and 322 each coordinate [4Fe-4S] cluster.

Belongs to the IspG family. [4Fe-4S] cluster serves as cofactor.

It carries out the reaction (2E)-4-hydroxy-3-methylbut-2-enyl diphosphate + oxidized [flavodoxin] + H2O + 2 H(+) = 2-C-methyl-D-erythritol 2,4-cyclic diphosphate + reduced [flavodoxin]. The protein operates within isoprenoid biosynthesis; isopentenyl diphosphate biosynthesis via DXP pathway; isopentenyl diphosphate from 1-deoxy-D-xylulose 5-phosphate: step 5/6. Converts 2C-methyl-D-erythritol 2,4-cyclodiphosphate (ME-2,4cPP) into 1-hydroxy-2-methyl-2-(E)-butenyl 4-diphosphate. This Clavibacter michiganensis subsp. michiganensis (strain NCPPB 382) protein is 4-hydroxy-3-methylbut-2-en-1-yl diphosphate synthase (flavodoxin).